Consider the following 313-residue polypeptide: Platelet glycoprotein VI (313 aa).

The signal sequence occupies residues 1 to 21 (MSPASPTFFCIGLCVLQVIQT). Topologically, residues 22-265 (QSGPLPKPSL…FGFAHQHYAK (244 aa)) are extracellular. Ig-like C2-type domains are found at residues 27-105 (PKPS…DQLE) and 115-197 (PSLS…APSD). A disulfide bond links Cys-49 and Cys-89. An N-linked (GlcNAc...) asparagine glycan is attached at Asn-93. The cysteines at positions 135 and 181 are disulfide-linked. The interval 213-236 (VPTEESFPVTESSRRPSILPTNKI) is disordered. The N-linked (GlcNAc...) asparagine glycan is linked to Asn-244. The helical transmembrane segment at 266 to 286 (GNLVRICLGATIIIILLGLLA) threads the bilayer. Residues 287-313 (EDWHSRKKCLQHRMRALQRPLPPLPLA) are Cytoplasmic-facing.

Associated with Fc receptor gamma chain. The GPVI:FcRgamma complex is associated with the Src kinase family FYN and LYN. Interacts with TRAF4. Interacts with COL1A1, but not with COL4A4. In terms of tissue distribution, megakaryocytes and platelets.

The protein resides in the cell membrane. Functionally, collagen receptor involved in collagen-induced platelet adhesion and activation. Plays a key role in platelet procoagulant activity and subsequent thrombin and fibrin formation. This procoagulant function may contribute to arterial and venous thrombus formation. The signaling pathway involves the FcR gamma-chain, the Src kinases (likely FYN or LYN) and SYK, the adapter protein LAT and leads to the activation of PLCG2. This is Platelet glycoprotein VI from Mus musculus (Mouse).